A 958-amino-acid polypeptide reads, in one-letter code: Glycine dehydrogenase (decarboxylating) 2 (958 aa).

An N6-(pyridoxal phosphate)lysine modification is found at K707.

The protein belongs to the GcvP family. The glycine cleavage system is composed of four proteins: P, T, L and H. Pyridoxal 5'-phosphate is required as a cofactor.

The catalysed reaction is N(6)-[(R)-lipoyl]-L-lysyl-[glycine-cleavage complex H protein] + glycine + H(+) = N(6)-[(R)-S(8)-aminomethyldihydrolipoyl]-L-lysyl-[glycine-cleavage complex H protein] + CO2. Functionally, the glycine cleavage system catalyzes the degradation of glycine. The P protein binds the alpha-amino group of glycine through its pyridoxal phosphate cofactor; CO(2) is released and the remaining methylamine moiety is then transferred to the lipoamide cofactor of the H protein. The chain is Glycine dehydrogenase (decarboxylating) 2 (gcvP2) from Pseudomonas aeruginosa (strain ATCC 15692 / DSM 22644 / CIP 104116 / JCM 14847 / LMG 12228 / 1C / PRS 101 / PAO1).